The sequence spans 75 residues: Sec-independent protein translocase protein TatA (75 aa).

The chain crosses the membrane as a helical span at residues 1–21 (MGGISIWQLLIIVAIIVLLFG). The tract at residues 50–75 (DAEFKSLNKDESATAGSEKVKDKEQA) is disordered.

The protein belongs to the TatA/E family. As to quaternary structure, the Tat system comprises two distinct complexes: a TatABC complex, containing multiple copies of TatA, TatB and TatC subunits, and a separate TatA complex, containing only TatA subunits. Substrates initially bind to the TatABC complex, which probably triggers association of the separate TatA complex to form the active translocon.

It is found in the cell inner membrane. Its function is as follows. Part of the twin-arginine translocation (Tat) system that transports large folded proteins containing a characteristic twin-arginine motif in their signal peptide across membranes. TatA could form the protein-conducting channel of the Tat system. This chain is Sec-independent protein translocase protein TatA, found in Mannheimia succiniciproducens (strain KCTC 0769BP / MBEL55E).